Here is a 344-residue protein sequence, read N- to C-terminus: Thiamine thiazole synthase (344 aa).

Substrate contacts are provided by residues cysteine 90, 111 to 112, glycine 119, and valine 184; that span reads EA. Cysteine 232 carries the post-translational modification 2,3-didehydroalanine (Cys). Substrate-binding positions include aspartate 234, histidine 249, methionine 301, and 311–313; that span reads RMG.

It belongs to the THI4 family. As to quaternary structure, homooctamer. Interacts with cyp-41. Fe cation is required as a cofactor. Post-translationally, during the catalytic reaction, a sulfide is transferred from Cys-232 to a reaction intermediate, generating a dehydroalanine residue.

It localises to the cytoplasm. It is found in the nucleus. The enzyme catalyses [ADP-thiazole synthase]-L-cysteine + glycine + NAD(+) = [ADP-thiazole synthase]-dehydroalanine + ADP-5-ethyl-4-methylthiazole-2-carboxylate + nicotinamide + 3 H2O + 2 H(+). Its function is as follows. Involved in biosynthesis of the thiamine precursor thiazole. Catalyzes the conversion of NAD and glycine to adenosine diphosphate 5-(2-hydroxyethyl)-4-methylthiazole-2-carboxylic acid (ADT), an adenylated thiazole intermediate. The reaction includes an iron-dependent sulfide transfer from a conserved cysteine residue of the protein to a thiazole intermediate. The enzyme can only undergo a single turnover, which suggests it is a suicide enzyme. May have additional roles in adaptation to various stress conditions and in DNA damage tolerance. This Neurospora crassa (strain ATCC 24698 / 74-OR23-1A / CBS 708.71 / DSM 1257 / FGSC 987) protein is Thiamine thiazole synthase.